Here is a 608-residue protein sequence, read N- to C-terminus: Formate hydrogenlyase subunit 3 (608 aa).

The next 12 helical transmembrane spans lie at 10-26 (GVAW…LFSF), 44-67 (LYTA…LSLV), 76-93 (LNAI…FVSL), 116-140 (AAAV…MALC), 153-173 (LWFA…WLLW), 197-218 (IWLL…HGWV), 229-251 (AAAL…LSLL), 258-280 (WWGI…YALV), 296-312 (IGII…GIAL), 416-440 (LAVG…VTFL), 453-476 (CAPL…GVAA), and 502-521 (MITL…MAIC).

The protein belongs to the complex I subunit 4 family. In terms of assembly, FHL comprises of a formate dehydrogenase, unidentified electron carriers and a hydrogenase (isoenzyme 3). In this non-energy conserving pathway molecular hydrogen and carbodioxide from formate are released.

It localises to the cell inner membrane. In Escherichia coli (strain K12), this protein is Formate hydrogenlyase subunit 3 (hycC).